Reading from the N-terminus, the 155-residue chain is UPF0266 membrane protein LMHCC_1856 (155 aa).

Helical transmembrane passes span 8-28 (IFLF…DAVI), 46-66 (RWDG…NTFF), and 70-90 (PFST…ICFF).

It belongs to the UPF0266 family.

The protein localises to the cell membrane. This Listeria monocytogenes serotype 4a (strain HCC23) protein is UPF0266 membrane protein LMHCC_1856.